A 357-amino-acid chain; its full sequence is GTPase Obg (357 aa).

Residues 1–159 (MKFVDEAFID…RNLKLELKVL (159 aa)) enclose the Obg domain. Positions 160–334 (ADVGLLGMPN…LVQSIFQHVH (175 aa)) constitute an OBG-type G domain. GTP contacts are provided by residues 166 to 173 (GMPNAGKS), 191 to 195 (FTTLH), 213 to 216 (DIPG), 284 to 287 (NKLD), and 315 to 317 (SAL). Residues Ser173 and Thr193 each contribute to the Mg(2+) site.

Belongs to the TRAFAC class OBG-HflX-like GTPase superfamily. OBG GTPase family. Monomer. Mg(2+) serves as cofactor.

The protein localises to the cytoplasm. In terms of biological role, an essential GTPase which binds GTP, GDP and possibly (p)ppGpp with moderate affinity, with high nucleotide exchange rates and a fairly low GTP hydrolysis rate. Plays a role in control of the cell cycle, stress response, ribosome biogenesis and in those bacteria that undergo differentiation, in morphogenesis control. This is GTPase Obg from Acidovorax ebreus (strain TPSY) (Diaphorobacter sp. (strain TPSY)).